The chain runs to 109 residues: UPF0060 membrane protein ABO_1373 (109 aa).

Transmembrane regions (helical) follow at residues 1–21 (MLAL…IVGC), 33–53 (PGWV…LLSL), 63–83 (AAYG…VEGV), and 87–107 (PWDF…MFAP).

It belongs to the UPF0060 family.

It localises to the cell inner membrane. The polypeptide is UPF0060 membrane protein ABO_1373 (Alcanivorax borkumensis (strain ATCC 700651 / DSM 11573 / NCIMB 13689 / SK2)).